Here is a 161-residue protein sequence, read N- to C-terminus: Endoribonuclease YbeY (161 aa).

His-121, His-125, and His-131 together coordinate Zn(2+).

It belongs to the endoribonuclease YbeY family. Zn(2+) serves as cofactor.

The protein localises to the cytoplasm. Single strand-specific metallo-endoribonuclease involved in late-stage 70S ribosome quality control and in maturation of the 3' terminus of the 16S rRNA. This Xanthomonas oryzae pv. oryzae (strain MAFF 311018) protein is Endoribonuclease YbeY.